Here is a 157-residue protein sequence, read N- to C-terminus: Protein-export protein SecB (157 aa).

This sequence belongs to the SecB family. As to quaternary structure, homotetramer, a dimer of dimers. One homotetramer interacts with 1 SecA dimer.

It is found in the cytoplasm. Functionally, one of the proteins required for the normal export of preproteins out of the cell cytoplasm. It is a molecular chaperone that binds to a subset of precursor proteins, maintaining them in a translocation-competent state. It also specifically binds to its receptor SecA. The protein is Protein-export protein SecB of Methylobacillus flagellatus (strain ATCC 51484 / DSM 6875 / VKM B-1610 / KT).